A 175-amino-acid polypeptide reads, in one-letter code: Two-on-two hemoglobin-3 (175 aa).

The heme site is built by Tyr85 and His98. Residues 153–175 (QNEKPKHKPQCACKHAANKPAEE) form a disordered region.

Belongs to the truncated hemoglobin family. Group II subfamily. As to quaternary structure, homodimer when ferric. Interacts with RGLG3 and RGLG4. Heme is required as a cofactor. In terms of tissue distribution, expressed ubiquitously, with higher levels in root tissue than in shoot tissue.

Its function is as follows. Hemoglobin-like protein that exhibits an unusual concentration-independent binding of O(2) and CO. May promote shoot organogenesis from root explants in vitro. Inhibits RGLG3 and RGLG4 ubiquitination activity. This chain is Two-on-two hemoglobin-3 (GLB3), found in Arabidopsis thaliana (Mouse-ear cress).